Reading from the N-terminus, the 273-residue chain is NAD-dependent protein deacylase (273 aa).

Residues 20–272 enclose the Deacetylase sirtuin-type domain; that stretch reads RERLRQRIFF…PEFVEKLLKG (253 aa). 48–67 contributes to the NAD(+) binding site; it reads GAGISAESGIRTFRAADGLW. Residues Y92 and R95 each coordinate substrate. Residue 129–132 coordinates NAD(+); it reads QNID. H147 serves as the catalytic Proton acceptor. The Zn(2+) site is built by C155 and C174. NAD(+) contacts are provided by residues 214–216, 240–242, and A258; these read GTS and NLE.

The protein belongs to the sirtuin family. Class III subfamily. The cofactor is Zn(2+).

It localises to the cytoplasm. The enzyme catalyses N(6)-acetyl-L-lysyl-[protein] + NAD(+) + H2O = 2''-O-acetyl-ADP-D-ribose + nicotinamide + L-lysyl-[protein]. The catalysed reaction is N(6)-succinyl-L-lysyl-[protein] + NAD(+) + H2O = 2''-O-succinyl-ADP-D-ribose + nicotinamide + L-lysyl-[protein]. It catalyses the reaction N(6)-(2-hydroxyisobutanoyl)-L-lysyl-[protein] + NAD(+) + H2O = 2''-O-(2-hydroxyisobutanoyl)-ADP-D-ribose + nicotinamide + L-lysyl-[protein]. NAD-dependent lysine deacetylase that specifically removes acetyl groups on target proteins. Also acts as a protein-lysine deacylase by mediating protein desuccinylation and de-2-hydroxyisobutyrylation. Modulates the activities of several proteins which are inactive in their acylated form. The chain is NAD-dependent protein deacylase from Escherichia coli O6:H1 (strain CFT073 / ATCC 700928 / UPEC).